The chain runs to 93 residues: Neutrophil cationic peptide 1 type A (93 aa).

An N-terminal signal peptide occupies residues 1 to 19 (MRTVPLFAACLLLTLMAQA). The propeptide occupies 20–62 (EPLPRAADHSDTKMKGDREDHVAVISFWEEESTSLEDAGAGAG). Disulfide bonds link Cys65–Cys93, Cys67–Cys82, and Cys72–Cys92.

The protein belongs to the alpha-defensin family.

The protein localises to the secreted. In terms of biological role, has antibiotic, anti-fungi and antiviral activity. In Cavia porcellus (Guinea pig), this protein is Neutrophil cationic peptide 1 type A.